A 192-amino-acid chain; its full sequence is Holliday junction branch migration complex subunit RuvA (192 aa).

The domain I stretch occupies residues 1–61 (MFEYLKGIVA…DTGITLYGFL (61 aa)). Positions 62-137 (SLEDKELFLK…KLGDYVKKSA (76 aa)) are domain II. The flexible linker stretch occupies residues 137–140 (AVAT). The tract at residues 141-192 (DLTPSLQDALLALVALGYTQKEVDRITPKLAKLPENTADGYIKEALALLLKK) is domain III.

Belongs to the RuvA family. As to quaternary structure, homotetramer. Forms an RuvA(8)-RuvB(12)-Holliday junction (HJ) complex. HJ DNA is sandwiched between 2 RuvA tetramers; dsDNA enters through RuvA and exits via RuvB. An RuvB hexamer assembles on each DNA strand where it exits the tetramer. Each RuvB hexamer is contacted by two RuvA subunits (via domain III) on 2 adjacent RuvB subunits; this complex drives branch migration. In the full resolvosome a probable DNA-RuvA(4)-RuvB(12)-RuvC(2) complex forms which resolves the HJ.

Its subcellular location is the cytoplasm. In terms of biological role, the RuvA-RuvB-RuvC complex processes Holliday junction (HJ) DNA during genetic recombination and DNA repair, while the RuvA-RuvB complex plays an important role in the rescue of blocked DNA replication forks via replication fork reversal (RFR). RuvA specifically binds to HJ cruciform DNA, conferring on it an open structure. The RuvB hexamer acts as an ATP-dependent pump, pulling dsDNA into and through the RuvAB complex. HJ branch migration allows RuvC to scan DNA until it finds its consensus sequence, where it cleaves and resolves the cruciform DNA. The protein is Holliday junction branch migration complex subunit RuvA of Lactobacillus gasseri (strain ATCC 33323 / DSM 20243 / BCRC 14619 / CIP 102991 / JCM 1131 / KCTC 3163 / NCIMB 11718 / NCTC 13722 / AM63).